The sequence spans 239 residues: Large ribosomal subunit protein uL3 (239 aa).

Position 151 is an N5-methylglutamine (Gln151).

This sequence belongs to the universal ribosomal protein uL3 family. In terms of assembly, part of the 50S ribosomal subunit. Forms a cluster with proteins L14 and L19. In terms of processing, methylated by PrmB.

In terms of biological role, one of the primary rRNA binding proteins, it binds directly near the 3'-end of the 23S rRNA, where it nucleates assembly of the 50S subunit. The polypeptide is Large ribosomal subunit protein uL3 (Ruegeria sp. (strain TM1040) (Silicibacter sp.)).